Reading from the N-terminus, the 820-residue chain is MAITRRSFLKGVATTSAASVIGPSLLASASANAVETTGTWKVSGSHWGAFRAHIYAGKVQEIKPIELDQNPTEMLNGIKGIIYSPSRVRYPMVRLDWLKKHKYSADTRGNNRFVRVTWDEALDLFYRELERVQKEYGPWALHAGQTGWNQTGSFNNCTAHMQRAVGMHGNYITKVGDYSTGAGQTILPYVLGSTEVYAQGTSWSEILENADNIILWANDPVKNLQVGWNCETHESYAYLAQLKEKVAKGEINVISVDPVKNKTQRYLENDHLYVNPMTDVPFMLAIAHVLYTENLYDKKFIETYCLGFEEFINYVQGKTKDKVEKTPEWAAPICGVKADKIREFARMLVKGRTQILMGWCIQRQEHGEQPYWAAAVVAAMIGQIGLPGGGISYGHHYSSIGVPSTGFAGPGGFPRNLDAGMKPKWDNNDFNGYSRTIPVARWIDCLLEPGKEINYNGGKVKLPDFKMMVISGCNPWHHHQDRNRMKQAFQKLQTVVTIDFAWTATCRFSDIVLPACTQWERNDIDVYGSYSSRGLIAMHRLVDPLFQSKPDFQIMKELTERFGRSEEYSRGMSEMDWIRSLYNDCKKSNEGKFEMPEFDEFWEKSVLDFGQGQPWVRHADFRQDPEINPLGTPSGFIEITSRKIGRYGYEHCQEHPMWFEKSERSHGGPGSDKHPFWLQSCHPDKRLHSQMCESEEFRATYAVKGREPVYINPLDAKAKGIKEGDLVRVFNDRGQLLAGAVLTDSYPRGVIRIEEGAWYGPLSEKVGAICTYGDPNTLTQDIGSSELAQATSANTCIVDFEKFTGKVPPVTSFGGPIEVA.

Residues 1–33 (MAITRRSFLKGVATTSAASVIGPSLLASASANA) constitute a signal peptide (tat-type signal). Ser179 contacts Mo-bis(molybdopterin guanine dinucleotide).

This sequence belongs to the prokaryotic molybdopterin-containing oxidoreductase family. It depends on Mo-bis(molybdopterin guanine dinucleotide) as a cofactor. In terms of processing, predicted to be exported by the Tat system. The position of the signal peptide cleavage has not been experimentally proven.

Its subcellular location is the periplasm. It carries out the reaction trimethylamine + 2 Fe(III)-[cytochrome c] + H2O = trimethylamine N-oxide + 2 Fe(II)-[cytochrome c] + 3 H(+). Its function is as follows. Reduces trimethylamine-N-oxide (TMAO) into trimethylamine; an anaerobic reaction coupled to energy-yielding reactions. The polypeptide is Trimethylamine-N-oxide reductase (torA) (Vibrio vulnificus (strain YJ016)).